We begin with the raw amino-acid sequence, 79 residues long: Small ribosomal subunit protein uS17 (79 aa).

The protein belongs to the universal ribosomal protein uS17 family. In terms of assembly, part of the 30S ribosomal subunit.

Functionally, one of the primary rRNA binding proteins, it binds specifically to the 5'-end of 16S ribosomal RNA. In Rhizobium rhizogenes (strain K84 / ATCC BAA-868) (Agrobacterium radiobacter), this protein is Small ribosomal subunit protein uS17.